We begin with the raw amino-acid sequence, 350 residues long: Phenylalanine--tRNA ligase alpha subunit (350 aa).

Position 262 (glutamate 262) interacts with Mg(2+).

It belongs to the class-II aminoacyl-tRNA synthetase family. Phe-tRNA synthetase alpha subunit type 1 subfamily. In terms of assembly, tetramer of two alpha and two beta subunits. Requires Mg(2+) as cofactor.

The protein localises to the cytoplasm. The catalysed reaction is tRNA(Phe) + L-phenylalanine + ATP = L-phenylalanyl-tRNA(Phe) + AMP + diphosphate + H(+). In Thermus thermophilus (strain ATCC BAA-163 / DSM 7039 / HB27), this protein is Phenylalanine--tRNA ligase alpha subunit.